We begin with the raw amino-acid sequence, 248 residues long: Cobalt transport protein CbiM (248 aa).

Positions 1–29 (MKRVSVKNYLVCLLIAVCAIFVFPANASA) are cleaved as a signal peptide. 6 helical membrane-spanning segments follow: residues 40–60 (GWCISWGVMCMPFLVIGFFSI), 72–92 (TLLAMCGAFAFVLSALKMPSV), 104–124 (LGAVLFGPTAMSVIGAIILLF), 136–156 (TLGANVFSMAIVGPLVSFGVF), 167–187 (GLAVFLAVFFGDLMTYVITSV), and 210–230 (IFGFTQVPLAVCEGLLTVVIY).

It belongs to the CbiM family. As to quaternary structure, forms an energy-coupling factor (ECF) transporter complex composed of an ATP-binding protein (A component, CbiO), a transmembrane protein (T component, CbiQ) and 2 possible substrate-capture proteins (S components, CbiM and CbiN) of unknown stoichimetry.

It is found in the cell membrane. It functions in the pathway cofactor biosynthesis; adenosylcobalamin biosynthesis. Part of the energy-coupling factor (ECF) transporter complex CbiMNOQ involved in cobalt import. This chain is Cobalt transport protein CbiM, found in Ruminiclostridium cellulolyticum (strain ATCC 35319 / DSM 5812 / JCM 6584 / H10) (Clostridium cellulolyticum).